The chain runs to 144 residues: MRKIDLCLSSEGSEVILATSSDEKHPPENIIDGNPETFWTTTGMFPQEFIICFHKHVRIERLVIQSYFVQTLKIEKSTSKEPVDFEQWIEKDLVHTEGQLQNEEIVAHDGSATYLRFIIVSAFDHFASVHSVSAEGTVVSNLSS.

Residues N29, D32, and T37 each coordinate Ca(2+).

Belongs to the IFT25 family. As to quaternary structure, component of the IFT complex B, at least composed of IFT20, IFT22, IFT25, IFT27, IFT46, IFT52, TRAF3IP1/IFT54, IFT57, IFT74, IFT80, IFT81, and IFT88. Interacts with IFT27. Interacts with IFT88. As to expression, detected in placenta.

It localises to the cell projection. It is found in the cilium. Component of the IFT complex B required for sonic hedgehog/SHH signaling. May mediate transport of SHH components: required for the export of SMO and PTCH1 receptors out of the cilium and the accumulation of GLI2 at the ciliary tip in response to activation of the SHH pathway, suggesting it is involved in the dynamic transport of SHH signaling molecules within the cilium. Not required for ciliary assembly. Its role in intraflagellar transport is mainly seen in tissues rich in ciliated cells such as kidney and testis. Essential for male fertility, spermiogenesis and sperm flagella formation. Plays a role in the early development of the kidney. May be involved in the regulation of ureteric bud initiation. This is Intraflagellar transport protein 25 homolog from Homo sapiens (Human).